Reading from the N-terminus, the 331-residue chain is Ketol-acid reductoisomerase (NADP(+)) (331 aa).

The 181-residue stretch at 2 to 182 (ARMYYDADAN…GGTRGGILET (181 aa)) folds into the KARI N-terminal Rossmann domain. NADP(+)-binding positions include 25-28 (YGSQ), S51, S53, and 83-86 (DDVQ). H108 is an active-site residue. G134 contributes to the NADP(+) binding site. Positions 183–328 (TFREETETDL…KDLRAMFSWL (146 aa)) constitute a KARI C-terminal knotted domain. The Mg(2+) site is built by D191, E195, E227, and E231. S252 lines the substrate pocket.

The protein belongs to the ketol-acid reductoisomerase family. The cofactor is Mg(2+).

It catalyses the reaction (2R)-2,3-dihydroxy-3-methylbutanoate + NADP(+) = (2S)-2-acetolactate + NADPH + H(+). The enzyme catalyses (2R,3R)-2,3-dihydroxy-3-methylpentanoate + NADP(+) = (S)-2-ethyl-2-hydroxy-3-oxobutanoate + NADPH + H(+). It participates in amino-acid biosynthesis; L-isoleucine biosynthesis; L-isoleucine from 2-oxobutanoate: step 2/4. Its pathway is amino-acid biosynthesis; L-valine biosynthesis; L-valine from pyruvate: step 2/4. Involved in the biosynthesis of branched-chain amino acids (BCAA). Catalyzes an alkyl-migration followed by a ketol-acid reduction of (S)-2-acetolactate (S2AL) to yield (R)-2,3-dihydroxy-isovalerate. In the isomerase reaction, S2AL is rearranged via a Mg-dependent methyl migration to produce 3-hydroxy-3-methyl-2-ketobutyrate (HMKB). In the reductase reaction, this 2-ketoacid undergoes a metal-dependent reduction by NADPH to yield (R)-2,3-dihydroxy-isovalerate. This is Ketol-acid reductoisomerase (NADP(+)) from Picosynechococcus sp. (strain ATCC 27264 / PCC 7002 / PR-6) (Agmenellum quadruplicatum).